A 71-amino-acid chain; its full sequence is Large ribosomal subunit protein bL31 (71 aa).

Cysteine 16, cysteine 18, cysteine 37, and cysteine 40 together coordinate Zn(2+).

The protein belongs to the bacterial ribosomal protein bL31 family. Type A subfamily. Part of the 50S ribosomal subunit. Zn(2+) serves as cofactor.

Its function is as follows. Binds the 23S rRNA. The chain is Large ribosomal subunit protein bL31 from Nitratidesulfovibrio vulgaris (strain DSM 19637 / Miyazaki F) (Desulfovibrio vulgaris).